We begin with the raw amino-acid sequence, 1564 residues long: ATP-dependent permease PDR10 (1564 aa).

A compositionally biased stretch (polar residues) spans 1-16; sequence MLQAPSSSNSGLNQGN. Residues 1–37 form a disordered region; the sequence is MLQAPSSSNSGLNQGNAAPDGPPNETQPYEGLDAAAQ. Residues 1-587 are Cytoplasmic-facing; it reads MLQAPSSSNS…AAIFFAILFN (587 aa). Positions 174-430 constitute an ABC transporter 1 domain; that stretch reads ISRRLFHRTH…FQRMGYVCPE (257 aa). 5 consecutive transmembrane segments (helical) span residues 588–608, 624–644, 674–694, 699–719, and 732–752; these read AFSS…TEKH, TFSD…PYYF, RCIG…SVLL, MYTG…WISY, and INEF…GPNY. N-linked (GlcNAc...) asparagine glycosylation occurs at asparagine 754. Residues 839 to 849 show a composition bias toward basic residues; it reads KGIVSEKKKKN. Residues 839–872 are disordered; the sequence is KGIVSEKKKKNQPTLSTSDAEKDVEMNNNSSATD. The chain crosses the membrane as a helical span at residues 841–861; it reads IVSEKKKKNQPTLSTSDAEKD. The Cytoplasmic segment spans residues 862 to 1304; that stretch reads VEMNNNSSAT…IFMFTVVFNP (443 aa). The ABC transporter 2 domain occupies 923–1166; it reads FHWKNLCYDI…MINYFEAHGA (244 aa). 959–966 is a binding site for ATP; that stretch reads GASGAGKT. Helical transmembrane passes span 1305-1325, 1340-1360, 1390-1410, 1426-1446, 1459-1479, and 1491-1511; these read ILQQ…ARER, ILVE…VYYY, VYIS…ENAA, VLAT…VSPL, ANAS…PSGM, and STGT…FCQF. Over 1512 to 1564 the chain is Cytoplasmic; that stretch reads SSTNDYLATVSSSYSRRWMNYGIFSAYIVFDYCAAIFLYWLVRVPKKSKKLKK.

This sequence belongs to the ABC transporter superfamily. ABCG family. PDR (TC 3.A.1.205) subfamily.

The protein resides in the membrane. This chain is ATP-dependent permease PDR10 (PDR10), found in Saccharomyces cerevisiae (strain ATCC 204508 / S288c) (Baker's yeast).